Here is a 228-residue protein sequence, read N- to C-terminus: Biosynthetic peptidoglycan transglycosylase (228 aa).

The chain crosses the membrane as a helical span at residues 8–28; it reads ILAALVAAFLLYNLWVLGHII.

It belongs to the glycosyltransferase 51 family.

The protein resides in the cell inner membrane. It catalyses the reaction [GlcNAc-(1-&gt;4)-Mur2Ac(oyl-L-Ala-gamma-D-Glu-L-Lys-D-Ala-D-Ala)](n)-di-trans,octa-cis-undecaprenyl diphosphate + beta-D-GlcNAc-(1-&gt;4)-Mur2Ac(oyl-L-Ala-gamma-D-Glu-L-Lys-D-Ala-D-Ala)-di-trans,octa-cis-undecaprenyl diphosphate = [GlcNAc-(1-&gt;4)-Mur2Ac(oyl-L-Ala-gamma-D-Glu-L-Lys-D-Ala-D-Ala)](n+1)-di-trans,octa-cis-undecaprenyl diphosphate + di-trans,octa-cis-undecaprenyl diphosphate + H(+). It functions in the pathway cell wall biogenesis; peptidoglycan biosynthesis. Functionally, peptidoglycan polymerase that catalyzes glycan chain elongation from lipid-linked precursors. In Chromobacterium violaceum (strain ATCC 12472 / DSM 30191 / JCM 1249 / CCUG 213 / NBRC 12614 / NCIMB 9131 / NCTC 9757 / MK), this protein is Biosynthetic peptidoglycan transglycosylase.